The following is a 60-amino-acid chain: Large ribosomal subunit protein bL32 (60 aa).

The segment at 1-25 (MAVQQNKKSPSKRGMHRSHNALNVP) is disordered. Residues 9–19 (SPSKRGMHRSH) are compositionally biased toward basic residues.

It belongs to the bacterial ribosomal protein bL32 family.

This is Large ribosomal subunit protein bL32 from Polaromonas naphthalenivorans (strain CJ2).